The chain runs to 309 residues: Ribosomal RNA small subunit methyltransferase H (309 aa).

S-adenosyl-L-methionine contacts are provided by residues 34-36 (GGH), Asp-54, Phe-80, Asp-102, and Gln-109.

The protein belongs to the methyltransferase superfamily. RsmH family.

Its subcellular location is the cytoplasm. The enzyme catalyses cytidine(1402) in 16S rRNA + S-adenosyl-L-methionine = N(4)-methylcytidine(1402) in 16S rRNA + S-adenosyl-L-homocysteine + H(+). Its function is as follows. Specifically methylates the N4 position of cytidine in position 1402 (C1402) of 16S rRNA. In Cellvibrio japonicus (strain Ueda107) (Pseudomonas fluorescens subsp. cellulosa), this protein is Ribosomal RNA small subunit methyltransferase H.